The sequence spans 113 residues: Nucleoid-associated protein SYNW0027 (113 aa).

It belongs to the YbaB/EbfC family. In terms of assembly, homodimer.

The protein localises to the cytoplasm. It is found in the nucleoid. Binds to DNA and alters its conformation. May be involved in regulation of gene expression, nucleoid organization and DNA protection. In Parasynechococcus marenigrum (strain WH8102), this protein is Nucleoid-associated protein SYNW0027.